The following is a 407-amino-acid chain: Aminomethyltransferase, mitochondrial (407 aa).

The transit peptide at 1–29 (MRGGLWQVGQSITRRLGQSDKKTIVRRWY) directs the protein to the mitochondrion. Substrate is bound by residues Glu-234, Arg-265, and Tyr-403.

It belongs to the GcvT family. As to quaternary structure, the glycine cleavage system is composed of four proteins: P, T, L and H.

It is found in the mitochondrion. The catalysed reaction is N(6)-[(R)-S(8)-aminomethyldihydrolipoyl]-L-lysyl-[protein] + (6S)-5,6,7,8-tetrahydrofolate = N(6)-[(R)-dihydrolipoyl]-L-lysyl-[protein] + (6R)-5,10-methylene-5,6,7,8-tetrahydrofolate + NH4(+). Functionally, the glycine cleavage system catalyzes the degradation of glycine. The polypeptide is Aminomethyltransferase, mitochondrial (GDCST) (Flaveria trinervia (Clustered yellowtops)).